The primary structure comprises 296 residues: Probable lipid kinase YegS-like (296 aa).

Residues 1 to 130 (MPHTLLILNG…IDLAQVNGEH (130 aa)) enclose the DAGKc domain. ATP contacts are provided by residues T37, 63-69 (GDGTINE), and T92. Mg(2+) contacts are provided by L212, D215, and L217. E268 acts as the Proton acceptor in catalysis.

It belongs to the diacylglycerol/lipid kinase family. YegS lipid kinase subfamily. It depends on Mg(2+) as a cofactor. The cofactor is Ca(2+).

The protein localises to the cytoplasm. In terms of biological role, probably phosphorylates lipids; the in vivo substrate is unknown. This is Probable lipid kinase YegS-like from Yersinia pseudotuberculosis serotype I (strain IP32953).